The sequence spans 277 residues: Protein CMSS1 (277 aa).

Residues 1 to 14 (MADDLGNEWWEEPA) show a composition bias toward acidic residues. Positions 1–91 (MADDLGNEWW…QHAPTAGTPE (91 aa)) are disordered. Basic and acidic residues predominate over residues 24–34 (EEVKESEESKG). Positions 35 to 52 (NKKKKIPSGKTQVKRKKE) are enriched in basic residues. A compositionally biased stretch (basic and acidic residues) spans 53 to 66 (VKVSQEAEKEDSAP).

Belongs to the CMS1 family.

The polypeptide is Protein CMSS1 (cmss1) (Xenopus laevis (African clawed frog)).